The chain runs to 104 residues: Large ribosomal subunit protein uL15z (104 aa).

It belongs to the universal ribosomal protein uL15 family.

The chain is Large ribosomal subunit protein uL15z (RPL27AA) from Arabidopsis thaliana (Mouse-ear cress).